Here is a 291-residue protein sequence, read N- to C-terminus: 11-beta-hydroxysteroid dehydrogenase 1 (291 aa).

Residues 1–7 lie on the Cytoplasmic side of the membrane; it reads MAFMKTH. Residues 8–24 traverse the membrane as a helical; Signal-anchor for type II membrane protein segment; it reads LLPILGLFMAYYYYSAY. Residues 25 to 291 are Lumenal-facing; it reads EEFRPEMLQG…TSYSTDGLIN (267 aa). Residues 41–67, 92–93, and 119–121 each bind NADP(+); these read GASK…TARS, TM, and NHI. Asn-123 and Asn-162 each carry an N-linked (GlcNAc...) asparagine glycan. Ser-170 is a binding site for substrate. Catalysis depends on Tyr-183, which acts as the Proton acceptor. 183–187 lines the NADP(+) pocket; that stretch reads YSASK. The N-linked (GlcNAc...) asparagine glycan is linked to Asn-207. 218-222 contributes to the NADP(+) binding site; that stretch reads IDTDT.

It belongs to the short-chain dehydrogenases/reductases (SDR) family. Homodimer. Abundantly expressed in the liver, followed by fibroblasts, also detected in the brain, lung, heart, and ovary, and in smaller amounts in kidney, skin, and spleen.

The protein resides in the endoplasmic reticulum membrane. The enzyme catalyses an 11beta-hydroxysteroid + NADP(+) = an 11-oxosteroid + NADPH + H(+). It catalyses the reaction cortisone + NADPH + H(+) = cortisol + NADP(+). It carries out the reaction corticosterone + NADP(+) = 11-dehydrocorticosterone + NADPH + H(+). The catalysed reaction is a 7beta-hydroxysteroid + NADP(+) = a 7-oxosteroid + NADPH + H(+). The enzyme catalyses 7-oxocholesterol + NADPH + H(+) = 7beta-hydroxycholesterol + NADP(+). It catalyses the reaction chenodeoxycholate + NADP(+) = 7-oxolithocholate + NADPH + H(+). It carries out the reaction 7-oxolithocholate + NADPH + H(+) = ursodeoxycholate + NADP(+). The catalysed reaction is glycochenodeoxycholate + NADP(+) = 7-oxoglycolithocholate + NADPH + H(+). The enzyme catalyses taurochenodeoxycholate + NADP(+) = 7-oxotaurolithocholate + NADPH + H(+). It catalyses the reaction tauroursodeoxycholate + NADP(+) = 7-oxotaurolithocholate + NADPH + H(+). It carries out the reaction glycoursodeoxycholate + NADP(+) = 7-oxoglycolithocholate + NADPH + H(+). The catalysed reaction is 7-oxopregnenolone + NADPH + H(+) = 7beta-hydroxypregnenolone + NADP(+). The enzyme catalyses 3beta,7alpha-dihydroxyandrost-5-en-17-one + NADP(+) = 3beta-hydroxy-5-androstene-7,17-dione + NADPH + H(+). It catalyses the reaction 3beta-hydroxy-5-androstene-7,17-dione + NADPH + H(+) = 3beta,7beta-dihydroxyandrost-5-en-17-one + NADP(+). It carries out the reaction 3beta-hydroxy-5alpha-androstane-7,17-dione + NADPH + H(+) = 3beta,7beta-dihydroxy-5alpha-androstan-17-one + NADP(+). It participates in steroid metabolism. Controls the reversible conversion of biologically active glucocorticoids such as cortisone to cortisol, and 11-dehydrocorticosterone to corticosterone in the presence of NADP(H). Participates in the corticosteroid receptor-mediated anti-inflammatory response, as well as metabolic and homeostatic processes. Bidirectional in vitro, predominantly functions as a reductase in vivo, thereby increasing the concentration of active glucocorticoids. It has broad substrate specificity, besides glucocorticoids, it accepts other steroid and sterol substrates. Interconverts 7-oxo- and 7-hydroxy-neurosteroids such as 7-oxopregnenolone and 7beta-hydroxypregnenolone, 7-oxodehydroepiandrosterone (3beta-hydroxy-5-androstene-7,17-dione) and 7beta-hydroxydehydroepiandrosterone (3beta,7beta-dihydroxyandrost-5-en-17-one), among others. Catalyzes the stereo-specific conversion of the major dietary oxysterol, 7-ketocholesterol (7-oxocholesterol), into the more polar 7-beta-hydroxycholesterol metabolite. 7-oxocholesterol is one of the most important oxysterols, it participates in several events such as induction of apoptosis, accumulation in atherosclerotic lesions, lipid peroxidation, and induction of foam cell formation. Mediates the 7-oxo reduction of 7-oxolithocholate mainly to chenodeoxycholate, and to a lesser extent to ursodeoxycholate, both in its free form and when conjugated to glycine or taurine, providing a link between glucocorticoid activation and bile acid metabolism. Catalyzes the synthesis of 7-beta-25-dihydroxycholesterol from 7-oxo-25-hydroxycholesterol in vitro, which acts as a ligand for the G-protein-coupled receptor (GPCR) Epstein-Barr virus-induced gene 2 (EBI2) and may thereby regulate immune cell migration. In Saimiri sciureus (Common squirrel monkey), this protein is 11-beta-hydroxysteroid dehydrogenase 1 (HSD11B1).